We begin with the raw amino-acid sequence, 158 residues long: Coenzyme F420 hydrogenase subunit delta (158 aa).

This sequence belongs to the peptidase A31 family.

The chain is Coenzyme F420 hydrogenase subunit delta (frhD) from Methanothermobacter thermautotrophicus (strain ATCC 29096 / DSM 1053 / JCM 10044 / NBRC 100330 / Delta H) (Methanobacterium thermoautotrophicum).